Reading from the N-terminus, the 150-residue chain is MNTCIQLLILCLVTVINSENSTDHSTENTIENETEDVTKTELLKTIENETENVIETELPETVETEIQTEALNLPQSPEQRYCRSKGQYCSRTYFHRCCGNLVCQLHGFFNGTCVDCLAERKFCIWSSECCSGRCRLFRCRKNTHVKVIHY.

Positions 1–18 (MNTCIQLLILCLVTVINS) are cleaved as a signal peptide. 4 N-linked (GlcNAc...) asparagine glycosylation sites follow: Asn-20, Asn-32, Asn-48, and Asn-110. Intrachain disulfides connect Cys-116–Cys-130, Cys-123–Cys-134, and Cys-129–Cys-139.

The protein belongs to the UPF0506 family.

It localises to the secreted. The sequence is that of UPF0506 protein SJCHGC09643 from Schistosoma japonicum (Blood fluke).